The sequence spans 240 residues: Biosynthetic peptidoglycan transglycosylase (240 aa).

The helical transmembrane segment at 9-31 (FLNVVKWFAIASVLLVLLFRVVP) threads the bilayer.

The protein belongs to the glycosyltransferase 51 family.

The protein resides in the cell inner membrane. It catalyses the reaction [GlcNAc-(1-&gt;4)-Mur2Ac(oyl-L-Ala-gamma-D-Glu-L-Lys-D-Ala-D-Ala)](n)-di-trans,octa-cis-undecaprenyl diphosphate + beta-D-GlcNAc-(1-&gt;4)-Mur2Ac(oyl-L-Ala-gamma-D-Glu-L-Lys-D-Ala-D-Ala)-di-trans,octa-cis-undecaprenyl diphosphate = [GlcNAc-(1-&gt;4)-Mur2Ac(oyl-L-Ala-gamma-D-Glu-L-Lys-D-Ala-D-Ala)](n+1)-di-trans,octa-cis-undecaprenyl diphosphate + di-trans,octa-cis-undecaprenyl diphosphate + H(+). It participates in cell wall biogenesis; peptidoglycan biosynthesis. In terms of biological role, peptidoglycan polymerase that catalyzes glycan chain elongation from lipid-linked precursors. The protein is Biosynthetic peptidoglycan transglycosylase of Pseudomonas fluorescens (strain SBW25).